Reading from the N-terminus, the 59-residue chain is U17-myrmicitoxin-Tb1f (59 aa).

An N-terminal signal peptide occupies residues 1-27; sequence MEKNRTTTFSVYLTIILFLISTFITMV. The propeptide occupies 28–31; it reads ITES. Residue His-58 is modified to Histidine amide.

Expressed by the venom gland.

The protein resides in the secreted. The protein is U17-myrmicitoxin-Tb1f of Tetramorium bicarinatum (Tramp ant).